We begin with the raw amino-acid sequence, 102 residues long: Acid shock protein (102 aa).

The signal sequence occupies residues 1–21 (MKKVLALVVAAAMGLSSAAFA). The segment covering 22–41 (AETATTPAPTATTTKAAPAK) has biased composition (low complexity). Residues 22–58 (AETATTPAPTATTTKAAPAKTTHHKKQHKAAPAQKAQ) constitute a propeptide that is removed on maturation. The segment at 22–102 (AETATTPAPT…PAKPAAQPAA (81 aa)) is disordered. Positions 80 to 90 (AAKKHARKHSH) are enriched in basic residues. A compositionally biased stretch (low complexity) spans 91–102 (QQPAKPAAQPAA).

The protein belongs to the Asr family. Proteolytic processing gives rise to the active protein.

Its subcellular location is the periplasm. Functionally, required for growth and/or survival at acidic conditions. In Escherichia coli O127:H6 (strain E2348/69 / EPEC), this protein is Acid shock protein.